The following is a 288-amino-acid chain: MTSIGTGYDLSNSVFSPDGRNFQVEYAVKAVENGTTSIGIKCNDGVVFAVEKLITSKLLVPQKNVKIQVVDRHIGCVYSGLIPDGRHLVNRGREEAASFKKLYKTPIPIPAFADRLGQYVQAHTLYNSVRPFGVSTIFGGVDKNGAHLYMLEPSGSYWGYKGAATGKGRQSAKAELEKLVDHHPEGLSAREAVKQAAKIIYLAHEDNKEKDFELEISWCSLSETNGLHKFVKGDLLQEAIDFAQKEINGDDDEDEDDSDNVMSSDDENAPVATNANATTDQEGDIHLE.

N-acetylthreonine is present on Thr-2. Positions 247 to 288 are disordered; it reads INGDDDEDEDDSDNVMSSDDENAPVATNANATTDQEGDIHLE. The segment covering 249–268 has biased composition (acidic residues); sequence GDDDEDEDDSDNVMSSDDEN. Low complexity predominate over residues 269 to 279; that stretch reads APVATNANATT.

This sequence belongs to the peptidase T1A family. The 26S proteasome consists of a 20S proteasome core and two 19S regulatory subunits. The 20S proteasome core is composed of 28 subunits that are arranged in four stacked rings, resulting in a barrel-shaped structure. The two end rings are each formed by seven alpha subunits, and the two central rings are each formed by seven beta subunits. The catalytic chamber with the active sites is on the inside of the barrel. Post-translationally, the alpha and beta forms are probably products of the same gene with different post-translational modifications.

The protein resides in the cytoplasm. The protein localises to the nucleus. Its function is as follows. The proteasome degrades poly-ubiquitinated proteins in the cytoplasm and in the nucleus. It is essential for the regulated turnover of proteins and for the removal of misfolded proteins. The proteasome is a multicatalytic proteinase complex that is characterized by its ability to cleave peptides with Arg, Phe, Tyr, Leu, and Glu adjacent to the leaving group at neutral or slightly basic pH. It has an ATP-dependent proteolytic activity. The protein is Probable proteasome subunit alpha type-7 (PRE10) of Saccharomyces cerevisiae (strain ATCC 204508 / S288c) (Baker's yeast).